The primary structure comprises 311 residues: Aspartate carbamoyltransferase catalytic subunit (311 aa).

Carbamoyl phosphate contacts are provided by R55 and T56. K85 provides a ligand contact to L-aspartate. Positions 106, 135, and 138 each coordinate carbamoyl phosphate. Residues R168 and R230 each coordinate L-aspartate. Positions 268 and 269 each coordinate carbamoyl phosphate.

This sequence belongs to the aspartate/ornithine carbamoyltransferase superfamily. ATCase family. Heterododecamer (2C3:3R2) of six catalytic PyrB chains organized as two trimers (C3), and six regulatory PyrI chains organized as three dimers (R2).

The enzyme catalyses carbamoyl phosphate + L-aspartate = N-carbamoyl-L-aspartate + phosphate + H(+). The protein operates within pyrimidine metabolism; UMP biosynthesis via de novo pathway; (S)-dihydroorotate from bicarbonate: step 2/3. In terms of biological role, catalyzes the condensation of carbamoyl phosphate and aspartate to form carbamoyl aspartate and inorganic phosphate, the committed step in the de novo pyrimidine nucleotide biosynthesis pathway. This is Aspartate carbamoyltransferase catalytic subunit from Escherichia coli (strain 55989 / EAEC).